A 102-amino-acid polypeptide reads, in one-letter code: Envelope protein US9 (102 aa).

Over 1-75 the chain is Intravirion; sequence MAGQNTMEGE…KIYHRKKFCY (75 aa). The short motif at 14–15 is the Di-leucine internalization motif element; it reads LL. An acidic region spans residues 41–55; it reads EKCYYSDSENETADE. 2 positions are modified to phosphoserine; by host CK2: Ser-46 and Ser-48. Residues 76–96 traverse the membrane as a helical; Signal-anchor for type II membrane protein segment; it reads ITLIIVFVFAMTGAAFALGYI. Over 97–102 the chain is Virion surface; the sequence is TSQFVG.

The protein belongs to the alphaherpesvirinae envelope protein US9 family. Phosphorylated on serines within the acidic cluster, possibly by host CK2. Phosphorylation determines whether endocytosed viral US9 traffics to the trans-Golgi network or recycles to the cell membrane.

The protein localises to the virion membrane. It localises to the host Golgi apparatus membrane. Its subcellular location is the host Golgi apparatus. It is found in the host trans-Golgi network. The protein resides in the host cell membrane. In terms of biological role, essential for the anterograde spread of the infection throughout the host nervous system. Together with the gE/gI heterodimer, US9 is involved in the sorting and transport of viral structural components toward axon tips. The chain is Envelope protein US9 from Varicella-zoster virus (strain Dumas) (HHV-3).